A 126-amino-acid chain; its full sequence is S-adenosylmethionine decarboxylase proenzyme (126 aa).

Ser63 (schiff-base intermediate with substrate; via pyruvic acid) is an active-site residue. At Ser63 the chain carries Pyruvic acid (Ser); by autocatalysis. The active-site Proton acceptor; for processing activity is the His68. The active-site Proton donor; for catalytic activity is the Cys83.

The protein belongs to the prokaryotic AdoMetDC family. Type 1 subfamily. Heterotetramer of two alpha and two beta chains arranged as a dimer of alpha/beta heterodimers. Requires pyruvate as cofactor. In terms of processing, is synthesized initially as an inactive proenzyme. Formation of the active enzyme involves a self-maturation process in which the active site pyruvoyl group is generated from an internal serine residue via an autocatalytic post-translational modification. Two non-identical subunits are generated from the proenzyme in this reaction, and the pyruvate is formed at the N-terminus of the alpha chain, which is derived from the carboxyl end of the proenzyme. The post-translation cleavage follows an unusual pathway, termed non-hydrolytic serinolysis, in which the side chain hydroxyl group of the serine supplies its oxygen atom to form the C-terminus of the beta chain, while the remainder of the serine residue undergoes an oxidative deamination to produce ammonia and the pyruvoyl group blocking the N-terminus of the alpha chain.

It carries out the reaction S-adenosyl-L-methionine + H(+) = S-adenosyl 3-(methylsulfanyl)propylamine + CO2. The protein operates within amine and polyamine biosynthesis; S-adenosylmethioninamine biosynthesis; S-adenosylmethioninamine from S-adenosyl-L-methionine: step 1/1. In terms of biological role, catalyzes the decarboxylation of S-adenosylmethionine to S-adenosylmethioninamine (dcAdoMet), the propylamine donor required for the synthesis of the polyamines spermine and spermidine from the diamine putrescine. This is S-adenosylmethionine decarboxylase proenzyme from Bacillus velezensis (strain DSM 23117 / BGSC 10A6 / LMG 26770 / FZB42) (Bacillus amyloliquefaciens subsp. plantarum).